Consider the following 619-residue polypeptide: MSEVLQRITDPKEIKDLDEKELEILAEDLREFLIESVSNTGGHFASNLGVIDLTVALFKNFDFSEDRIIWDVGHQSYAYKILTGRKDKFNTLRQYGGLCGFPKRTESEYDFFATGHSSTSLSSAAGMARAQRLLGKDNKVIAVIGDGALTGGMALEALNDIGYRKDNLIIILNDNQMSICKNVGGLATYLNKLRMGVGYNKLKSDIGSTLDTTSLGKRVKNSLSKLKDGIKKIVVPSMYFEDIGLKYFGIVDGHNIRELNEVLSIAKNIKGPVIIHTVTKKGKGYELAEKNPNKYHGVSPFDLGEGVISKFSSRNYSSTFGEEMIKLAKNDDKVVAITAAMPDGTGLKDFREEFPDRFFDVGIAEQHAVTLAAGMAAEGLKPFFAVYSTFLQRAYDQVLHDVCIQKLPVTLCLDRAGLVGEDGETHQGIFDISFLSPMPNMTIVAPKCIDEMEVILKWASNFNAPLAIRYPRGGDIDVNLKPLSKIEYGKWEKVQEGEKIAIVATGKMVQHAMIAAQKIKEEKNIDILIINATFIKPIDKELLNSLSKDGFKIVTIEDNIKKGGFGEGVLEYLNEIGHKEKIVTLAFNDKFIEHGKPDILYKINGLDAEGIKNTLIELL.

Thiamine diphosphate is bound by residues His74 and 115-117; that span reads GHS. Asp146 lines the Mg(2+) pocket. Thiamine diphosphate-binding positions include 147–148, Asn175, Tyr285, and Glu365; that span reads GA. Asn175 contributes to the Mg(2+) binding site.

The protein belongs to the transketolase family. DXPS subfamily. In terms of assembly, homodimer. Requires Mg(2+) as cofactor. The cofactor is thiamine diphosphate.

It catalyses the reaction D-glyceraldehyde 3-phosphate + pyruvate + H(+) = 1-deoxy-D-xylulose 5-phosphate + CO2. It functions in the pathway metabolic intermediate biosynthesis; 1-deoxy-D-xylulose 5-phosphate biosynthesis; 1-deoxy-D-xylulose 5-phosphate from D-glyceraldehyde 3-phosphate and pyruvate: step 1/1. In terms of biological role, catalyzes the acyloin condensation reaction between C atoms 2 and 3 of pyruvate and glyceraldehyde 3-phosphate to yield 1-deoxy-D-xylulose-5-phosphate (DXP). The chain is 1-deoxy-D-xylulose-5-phosphate synthase from Clostridium perfringens (strain 13 / Type A).